The sequence spans 582 residues: GPI-anchor transamidase component PIGT (582 aa).

Residues 1 to 25 form the signal peptide; that stretch reads MAAAMPLGLPLRLLVLLLVGRGCCG. Residues 26 to 529 are Lumenal-facing; sequence CAEGPRDSLR…NLPTPDFSMP (504 aa). N168 carries N-linked (GlcNAc...) asparagine glycosylation. Disulfide bonds link C199-C276 and C230-C235. 2 N-linked (GlcNAc...) asparagine glycosylation sites follow: N295 and N331. The a 2-acyl-6-[6-phosphoethanolamine-alpha-D-mannosyl-(1-&gt;2)-6-phosphoethanolamine-alpha-D-mannosyl-(1-&gt;6)-2-phosphoethanolamine-alpha-D-mannosyl-(1-&gt;4)-alpha-D-glucosaminyl]-1-(1-radyl,2-acyl-sn-glycero-3-phospho)-1D-myo-inositol site is built by N465, D525, S527, and N531. A helical transmembrane segment spans residues 530 to 552; that stretch reads YNVICLTCTVVAVCYGSFYNLLT. At 553 to 582 the chain is on the cytoplasmic side; the sequence is RTFHIEEPKSGGLAKRLANLIRRARGVPPL.

It belongs to the PIGT family. In terms of assembly, heteropentamer. Part of the GPI-anchor transamidase complex, consisting of PIGK, PIGT, PIGS, PIGU and GAA1. In terms of processing, the disulfide bond between PIGK/GPI8 and PIGT is important for normal enzyme activity.

It is found in the endoplasmic reticulum membrane. It functions in the pathway glycolipid biosynthesis; glycosylphosphatidylinositol-anchor biosynthesis. Component of the glycosylphosphatidylinositol-anchor (GPI-anchor) transamidase (GPI-T) complex that catalyzes the formation of the linkage between a proprotein and a GPI-anchor and participates in GPI anchored protein biosynthesis. May play a crucial role in GPI-T complex assembly in the luminal layer. Binds GPI-anchor. The chain is GPI-anchor transamidase component PIGT from Mus musculus (Mouse).